We begin with the raw amino-acid sequence, 530 residues long: Chaperonin GroEL 2 (530 aa).

Residues 30 to 33 (TLGP), lysine 51, 87 to 91 (DGTTT), glycine 415, 479 to 481 (NAA), and aspartate 495 contribute to the ATP site.

It belongs to the chaperonin (HSP60) family. Forms a cylinder of 14 subunits composed of two heptameric rings stacked back-to-back. Interacts with the co-chaperonin GroES.

The protein resides in the cytoplasm. The catalysed reaction is ATP + H2O + a folded polypeptide = ADP + phosphate + an unfolded polypeptide.. Functionally, together with its co-chaperonin GroES, plays an essential role in assisting protein folding. The GroEL-GroES system forms a nano-cage that allows encapsulation of the non-native substrate proteins and provides a physical environment optimized to promote and accelerate protein folding. In Vibrio cholerae serotype O1 (strain ATCC 39315 / El Tor Inaba N16961), this protein is Chaperonin GroEL 2.